A 271-amino-acid polypeptide reads, in one-letter code: MLINFTKMHGLGNDFMVVDNLAGDITFNAKKITNLANRAFGIGFDQLLVVETSNIRGVDFRYVIYNSNGSEVEQCGNGARCFARFVNYKNLTHSNPITVKTRSNIISLHLNDDNTVCVDMGKPSFNPADIPLLVPQQSEYYQIEGFDLGAISIGNPHCVMLVKDVNTIDVNTIALKIQQSELLPNQANIGFMQILNTHEINLRVYERGSEETLACGSGACAAVAYGVEQGLLKKNVVVHLSGGDALIEYTQGGHIFLSGPAQFVFEGQVEI.

Asn-13, Gln-46, and Asn-66 together coordinate substrate. The active-site Proton donor is the Cys-75. Substrate-binding positions include 76–77 (GN), Asn-155, Asn-188, and 206–207 (ER). Cys-215 functions as the Proton acceptor in the catalytic mechanism. 216–217 (GS) is a substrate binding site.

This sequence belongs to the diaminopimelate epimerase family. As to quaternary structure, homodimer.

The protein resides in the cytoplasm. It catalyses the reaction (2S,6S)-2,6-diaminopimelate = meso-2,6-diaminopimelate. It functions in the pathway amino-acid biosynthesis; L-lysine biosynthesis via DAP pathway; DL-2,6-diaminopimelate from LL-2,6-diaminopimelate: step 1/1. Its function is as follows. Catalyzes the stereoinversion of LL-2,6-diaminopimelate (L,L-DAP) to meso-diaminopimelate (meso-DAP), a precursor of L-lysine and an essential component of the bacterial peptidoglycan. This Vesicomyosocius okutanii subsp. Calyptogena okutanii (strain HA) protein is Diaminopimelate epimerase.